Consider the following 129-residue polypeptide: Succinate dehydrogenase cytochrome b556 subunit (129 aa).

Topologically, residues methionine 1–alanine 26 are cytoplasmic. Residues serine 27 to leucine 52 form a helical membrane-spanning segment. The Periplasmic portion of the chain corresponds to serine 53–phenylalanine 68. A helical membrane pass occupies residues phenylalanine 69 to isoleucine 89. Position 84 (histidine 84) interacts with heme. Residues arginine 90–arginine 108 lie on the Cytoplasmic side of the membrane. Residues serine 109 to tryptophan 129 traverse the membrane as a helical segment.

This sequence belongs to the cytochrome b560 family. Part of an enzyme complex containing four subunits: a flavoprotein, an iron-sulfur protein, plus two membrane-anchoring proteins, SdhC and SdhD. The complex can form homotrimers. The cofactor is heme.

The protein resides in the cell inner membrane. It participates in carbohydrate metabolism; tricarboxylic acid cycle. Functionally, membrane-anchoring subunit of succinate dehydrogenase (SDH). The polypeptide is Succinate dehydrogenase cytochrome b556 subunit (sdhC) (Escherichia coli O157:H7).